Here is a 486-residue protein sequence, read N- to C-terminus: Glycogen synthase 2 (486 aa).

K15 is an ADP-alpha-D-glucose binding site.

This sequence belongs to the glycosyltransferase 1 family. Bacterial/plant glycogen synthase subfamily.

The enzyme catalyses [(1-&gt;4)-alpha-D-glucosyl](n) + ADP-alpha-D-glucose = [(1-&gt;4)-alpha-D-glucosyl](n+1) + ADP + H(+). Its pathway is glycan biosynthesis; glycogen biosynthesis. Its function is as follows. Synthesizes alpha-1,4-glucan chains using ADP-glucose. The polypeptide is Glycogen synthase 2 (glgA2) (Rhizobium meliloti (strain 1021) (Ensifer meliloti)).